Here is a 145-residue protein sequence, read N- to C-terminus: Protein SPMIP3 (145 aa).

In Mus musculus (Mouse), this protein is Protein SPMIP3.